Consider the following 291-residue polypeptide: 4-diphosphocytidyl-2-C-methyl-D-erythritol kinase (291 aa).

Lysine 21 is an active-site residue. 104 to 114 (PMGGGLGGGSS) provides a ligand contact to ATP. Aspartate 146 is an active-site residue.

This sequence belongs to the GHMP kinase family. IspE subfamily.

The catalysed reaction is 4-CDP-2-C-methyl-D-erythritol + ATP = 4-CDP-2-C-methyl-D-erythritol 2-phosphate + ADP + H(+). The protein operates within isoprenoid biosynthesis; isopentenyl diphosphate biosynthesis via DXP pathway; isopentenyl diphosphate from 1-deoxy-D-xylulose 5-phosphate: step 3/6. Functionally, catalyzes the phosphorylation of the position 2 hydroxy group of 4-diphosphocytidyl-2C-methyl-D-erythritol. In Methylococcus capsulatus (strain ATCC 33009 / NCIMB 11132 / Bath), this protein is 4-diphosphocytidyl-2-C-methyl-D-erythritol kinase.